We begin with the raw amino-acid sequence, 120 residues long: uncharacterized protein (120 aa).

It to phage T4 y06Q.

This is an uncharacterized protein from Escherichia coli (strain K12).